The following is a 223-amino-acid chain: Phosphoribosylformylglycinamidine synthase subunit PurQ (223 aa).

The 220-residue stretch at 4–223 folds into the Glutamine amidotransferase type-1 domain; the sequence is KIGVITFPGT…FLSAIGTIAA (220 aa). Cysteine 87 (nucleophile) is an active-site residue. Catalysis depends on residues histidine 195 and glutamate 197.

In terms of assembly, part of the FGAM synthase complex composed of 1 PurL, 1 PurQ and 2 PurS subunits.

The protein resides in the cytoplasm. It catalyses the reaction N(2)-formyl-N(1)-(5-phospho-beta-D-ribosyl)glycinamide + L-glutamine + ATP + H2O = 2-formamido-N(1)-(5-O-phospho-beta-D-ribosyl)acetamidine + L-glutamate + ADP + phosphate + H(+). The catalysed reaction is L-glutamine + H2O = L-glutamate + NH4(+). The protein operates within purine metabolism; IMP biosynthesis via de novo pathway; 5-amino-1-(5-phospho-D-ribosyl)imidazole from N(2)-formyl-N(1)-(5-phospho-D-ribosyl)glycinamide: step 1/2. Part of the phosphoribosylformylglycinamidine synthase complex involved in the purines biosynthetic pathway. Catalyzes the ATP-dependent conversion of formylglycinamide ribonucleotide (FGAR) and glutamine to yield formylglycinamidine ribonucleotide (FGAM) and glutamate. The FGAM synthase complex is composed of three subunits. PurQ produces an ammonia molecule by converting glutamine to glutamate. PurL transfers the ammonia molecule to FGAR to form FGAM in an ATP-dependent manner. PurS interacts with PurQ and PurL and is thought to assist in the transfer of the ammonia molecule from PurQ to PurL. In Corynebacterium efficiens (strain DSM 44549 / YS-314 / AJ 12310 / JCM 11189 / NBRC 100395), this protein is Phosphoribosylformylglycinamidine synthase subunit PurQ.